A 257-amino-acid chain; its full sequence is Diphthine synthase (257 aa).

S-adenosyl-L-methionine contacts are provided by residues leucine 9, aspartate 85, valine 88, serine 113–isoleucine 114, leucine 164, alanine 207, and histidine 232.

It belongs to the diphthine synthase family. Homodimer.

The enzyme catalyses 2-[(3S)-amino-3-carboxypropyl]-L-histidyl-[translation elongation factor 2] + 3 S-adenosyl-L-methionine = diphthine-[translation elongation factor 2] + 3 S-adenosyl-L-homocysteine + 3 H(+). It functions in the pathway protein modification; peptidyl-diphthamide biosynthesis. S-adenosyl-L-methionine-dependent methyltransferase that catalyzes the trimethylation of the amino group of the modified target histidine residue in translation elongation factor 2 (EF-2), to form an intermediate called diphthine. The three successive methylation reactions represent the second step of diphthamide biosynthesis. The sequence is that of Diphthine synthase from Methanococcus aeolicus (strain ATCC BAA-1280 / DSM 17508 / OCM 812 / Nankai-3).